The primary structure comprises 423 residues: Pre-mRNA-splicing regulator WTAP (423 aa).

Positions 234–423 (QQLSQMNQTQ…TSNASAGSVL (190 aa)) are disordered. Composition is skewed to polar residues over residues 239-276 (MNQTQGTSSGAGPSRTSPSTASEPSTQSEPANASSSNV), 285-301 (NGPSNGNSSQRGASGSS), 358-377 (DSPTGSETSVTQHSNDTDSN), and 392-404 (TAGTRHSTQNGLD). Residues 405–423 (SSAAAVATNTSNASAGSVL) are compositionally biased toward low complexity.

It belongs to the fl(2)d family. In terms of assembly, component of the WMM complex, a N6-methyltransferase complex composed of a catalytic subcomplex, named MAC, and of an associated subcomplex, named MACOM. Component of the MACOM subcomplex.

Its subcellular location is the nucleus speckle. It localises to the nucleus. The protein localises to the nucleoplasm. Functionally, associated component of the WMM complex, a complex that mediates N6-methyladenosine (m6A) methylation of RNAs, a modification that plays a role in the efficiency of mRNA splicing and RNA processing. The sequence is that of Pre-mRNA-splicing regulator WTAP from Danio rerio (Zebrafish).